Here is a 356-residue protein sequence, read N- to C-terminus: Uroporphyrinogen decarboxylase (356 aa).

Substrate contacts are provided by residues 25–29, Asp-75, Tyr-152, Thr-207, and His-326; that span reads RQAGR.

The protein belongs to the uroporphyrinogen decarboxylase family. As to quaternary structure, homodimer.

Its subcellular location is the cytoplasm. It carries out the reaction uroporphyrinogen III + 4 H(+) = coproporphyrinogen III + 4 CO2. The protein operates within porphyrin-containing compound metabolism; protoporphyrin-IX biosynthesis; coproporphyrinogen-III from 5-aminolevulinate: step 4/4. Functionally, catalyzes the decarboxylation of four acetate groups of uroporphyrinogen-III to yield coproporphyrinogen-III. This is Uroporphyrinogen decarboxylase from Magnetococcus marinus (strain ATCC BAA-1437 / JCM 17883 / MC-1).